A 320-amino-acid polypeptide reads, in one-letter code: MTTTVSTGATAVATLRETSPPVDGHEEARLNADSDDGSHGSQDPGKMFIGGLSWQTTAENLRDYFGRFGEVNECMVMRDPATKRARGFGFITFVDPSSVDKVLNNREHELDGKKIDPKVAFPKRTQAKLVTKTKKVFIGGLSATSTLEDMKQYFETYGKVEDAMLMFDKATQRHRGFGFVTFDSDEVADKVCEIHFHEINGKMVECKKAQPKEVMLPVQLNKSRAAAARNLYGMPPETLLAYAQYLPRFGGNLMYPNFTNVFNNMPGGYSGLSTPGGSSNRPPHQFDTASLYSLNNGGQLLDSQAQMFMNQQSYHSHSKY.

The span at 1 to 14 (MTTTVSTGATAVAT) shows a compositional bias: low complexity. The interval 1-48 (MTTTVSTGATAVATLRETSPPVDGHEEARLNADSDDGSHGSQDPGKMF) is disordered. At Thr-18 the chain carries Phosphothreonine. Phosphoserine is present on residues Ser-19 and Ser-34. Residues 23–38 (DGHEEARLNADSDDGS) are compositionally biased toward basic and acidic residues. 2 consecutive RRM domains span residues 45 to 124 (GKMF…FPKR) and 134 to 211 (KKVF…KAQP). 2 required for binding to target mRNAs regions span residues 88 to 93 (FGFITF) and 177 to 182 (FGFVTF).

It belongs to the Musashi family. Expressed in the gut and in AVA, AFD, RMD, RMED, RMEV, RMER and RMEL neurons (at protein level). In the tail expressed in neurons and all the ray sensilla. Expressed in male specific C1-C4 neurons.

The protein localises to the cytoplasm. It is found in the perikaryon. In terms of biological role, RNA binding protein that regulates the expression of target mRNAs at the translation level. Binds RNA containing the 5'-[GA]U(1-3)AGU-3' motif located in the 3' UTR of the target mRNA. Binds to the mRNA of three Arp2/3 complex components arx-1, arx-2 and arx-3 and negatively regulates their translation during association learning. Plays a role in time-dependent memory loss and the retention of conditioned behavior over time, probably through negative regulation of the Arp2/3 actin cytoskeleton branching complex and regulation of synapse size. Required for two aspects of male mating behavior: turning around the hermaphrodite head or tail and vulva location. This is RNA-binding protein Musashi homolog 1 from Caenorhabditis elegans.